The following is a 536-amino-acid chain: CTP synthase (536 aa).

Positions 1 to 267 (MSKFVFVTGG…CKETLRCLDL (267 aa)) are amidoligase domain. Residue serine 13 participates in CTP binding. UTP is bound at residue serine 13. ATP-binding positions include 14–19 (SIGKGI) and aspartate 71. Mg(2+) is bound by residues aspartate 71 and glutamate 141. Residues 148–150 (DIE), 188–193 (KTKPTQ), and lysine 224 contribute to the CTP site. Residues 188-193 (KTKPTQ) and lysine 224 contribute to the UTP site. Residues 292–534 (KVALVGKYIE…IKASREKLEQ (243 aa)) form the Glutamine amidotransferase type-1 domain. Glycine 354 serves as a coordination point for L-glutamine. Cysteine 381 (nucleophile; for glutamine hydrolysis) is an active-site residue. Residues 382 to 385 (LGMQ), glutamate 405, and arginine 462 contribute to the L-glutamine site. Catalysis depends on residues histidine 507 and glutamate 509.

This sequence belongs to the CTP synthase family. In terms of assembly, homotetramer.

The catalysed reaction is UTP + L-glutamine + ATP + H2O = CTP + L-glutamate + ADP + phosphate + 2 H(+). The enzyme catalyses L-glutamine + H2O = L-glutamate + NH4(+). It carries out the reaction UTP + NH4(+) + ATP = CTP + ADP + phosphate + 2 H(+). It functions in the pathway pyrimidine metabolism; CTP biosynthesis via de novo pathway; CTP from UDP: step 2/2. With respect to regulation, allosterically activated by GTP, when glutamine is the substrate; GTP has no effect on the reaction when ammonia is the substrate. The allosteric effector GTP functions by stabilizing the protein conformation that binds the tetrahedral intermediate(s) formed during glutamine hydrolysis. Inhibited by the product CTP, via allosteric rather than competitive inhibition. Catalyzes the ATP-dependent amination of UTP to CTP with either L-glutamine or ammonia as the source of nitrogen. Regulates intracellular CTP levels through interactions with the four ribonucleotide triphosphates. This Prochlorococcus marinus (strain MIT 9515) protein is CTP synthase.